The following is a 338-amino-acid chain: Limbic system-associated membrane protein (338 aa).

The N-terminal stretch at 1-28 (MVARAQPDRKQLPLVLLRLLCLLPTGLP) is a signal peptide. 3 Ig-like C2-type domains span residues 29 to 122 (VRSV…PKTS), 132 to 214 (PKIS…VRVT), and 219 to 306 (PTIT…LYLY). Residues N40, N66, N136, and N148 are each glycosylated (N-linked (GlcNAc...) asparagine). C53 and C111 are disulfide-bonded. Cystine bridges form between C153–C197 and C239–C290. N-linked (GlcNAc...) asparagine glycosylation is found at N279, N287, N300, and N315. A lipid anchor (GPI-anchor amidated asparagine) is attached at N315. Residues 316–338 (GSVSLAVPLWLLAASLLCLLSKC) constitute a propeptide, removed in mature form.

This sequence belongs to the immunoglobulin superfamily. IgLON family.

Its subcellular location is the cell membrane. In terms of biological role, mediates selective neuronal growth and axon targeting. Probably serves as a recognition molecule for the formation of limbic connections. This Gallus gallus (Chicken) protein is Limbic system-associated membrane protein.